The chain runs to 397 residues: Transcription factor xenB (397 aa).

The disordered stretch occupies residues 220-249; sequence TISDFETGDRQTISRSDTNSEVRPIPESPS. Polar residues predominate over residues 229–240; it reads RQTISRSDTNSE.

Functionally, transcription factor; part of the gene cluster that mediates the biosynthesis of xenoacremones such as xenoacremone A, a compound that shows inhibitory activity toward the PI3K/AKT signaling pathway and which has the ability to induce apoptosis of A549 lung cancer cells. Acts as a positive regulator of the xenoacremones biosynthesis gene cluster. This Xenoacremonium sinensis (Endophyte fungus) protein is Transcription factor xenB.